The following is a 557-amino-acid chain: MAAALPPMLLLLLLLLLHHPAAANPDAKRLYDDLLSNYNRLIRPVSNNTDTVLVKLGLRLSQLIDLNLKDQILTTNVWLEHEWQDHKFRWDPAEYGGVTELYVPSEHIWLPDIVLYNNADGEYVVTTMTKAVLHHTGKVVWTPPAIFKSSCEIDVRYFPFDQQTCFMKFGSWTYDGDQIDLKHINQKYDDNKVKVGIDLREYYPSVEWDILGVPAERHEKYYPCCAEPYPDIFFNITLRRKTLFYTVNLIVPCVGISYLSVLVFYLPADSGEKIALCISILLSQTMFFLLISEIIPSTSLALPLLGKYLLFTMVLVGLSVVITIMVLNVHYRKPSTHKMAPWVRKVFIRRLPKLLLMRVPEQLLADLASKRLLRHAHNSKLSAAAAAAVAAAASSSAASSPDSLRHHHLHQHQHQHHLQLHHLQRPGGCNGLHSATNRFGGSAGAFGGLPSVVGLDGSLSDVATRKKYPFELEKAIHNVLFIQNHMQRQDEFDAEDQDWGFVAMVLDRLFLWIFTIASIVGTFAILCEAPALYDDTKPIDMELSSVAQQQFLPDIDF.

The signal sequence occupies residues 1–23; that stretch reads MAAALPPMLLLLLLLLLHHPAAA. At 24 to 244 the chain is on the extracellular side; sequence NPDAKRLYDD…NITLRRKTLF (221 aa). N47 is a glycosylation site (N-linked (GlcNAc...) asparagine). 2 disulfide bridges follow: C151-C165 and C224-C225. N-linked (GlcNAc...) asparagine glycosylation is present at N235. 3 helical membrane-spanning segments follow: residues 245–266, 274–294, and 308–329; these read YTVNLIVPCVGISYLSVLVFYL, IALCISILLSQTMFFLLISEI, and YLLFTMVLVGLSVVITIMVLNV. Topologically, residues 330 to 500 are cytoplasmic; sequence HYRKPSTHKM…EFDAEDQDWG (171 aa). Residues 501-523 form a helical membrane-spanning segment; that stretch reads FVAMVLDRLFLWIFTIASIVGTF.

Belongs to the ligand-gated ion channel (TC 1.A.9) family. Acetylcholine receptor (TC 1.A.9.1) subfamily.

It localises to the postsynaptic cell membrane. It is found in the cell membrane. In terms of biological role, after binding acetylcholine, the AChR responds by an extensive change in conformation that affects all subunits and leads to opening of an ion-conducting channel across the plasma membrane. The chain is Acetylcholine receptor subunit alpha-L1 from Schistocerca gregaria (Desert locust).